The sequence spans 127 residues: Lymphocyte antigen 6D (127 aa).

Positions 1 to 20 (MKTALLVLLVLAVATSPAWA) are cleaved as a signal peptide. The UPAR/Ly6 domain maps to 21–108 (LRCHVCTNSA…AAPGHALLSS (88 aa)). 5 disulfide bridges follow: Cys23–Cys45, Cys26–Cys32, Cys38–Cys63, Cys67–Cys86, and Cys87–Cys92. The GPI-anchor amidated serine moiety is linked to residue Ser98. Residues 99-127 (AAPGHALLSSVTLGLATSLSLLTVMALCL) constitute a propeptide, removed in mature form.

As to expression, lymphoid cells lacking Ly6d, called ALP (all-lymphoid progenitor), retain full lymphoid potential and early thymic seeding activity, whereas cells containing Ly6d, called BLP (B-cell-biased lymphoid progenitor), up-regulate the B-cell specifying factors Ebf1 and Pax5 and behave essentially as B-cell progenitors (at protein level). Thymocytes and B-cells.

Its subcellular location is the cell membrane. Functionally, may act as a specification marker at earliest stage specification of lymphocytes between B- and T-cell development. Marks the earliest stage of B-cell specification. This Mus musculus (Mouse) protein is Lymphocyte antigen 6D (Ly6d).